The following is a 301-amino-acid chain: 5'-adenylylsulfate reductase-like 5 (301 aa).

The signal sequence occupies residues methionine 1–alanine 21. The Thioredoxin domain occupies cysteine 51 to glycine 164. N-linked (GlcNAc...) asparagine glycosylation occurs at asparagine 139. The helical transmembrane segment at phenylalanine 201–valine 221 threads the bilayer. A glycan (N-linked (GlcNAc...) asparagine) is linked at asparagine 268.

The protein resides in the membrane. In Oryza sativa subsp. japonica (Rice), this protein is 5'-adenylylsulfate reductase-like 5 (APRL5).